A 436-amino-acid chain; its full sequence is POU domain, class 2, transcription factor 3 (436 aa).

Disordered regions lie at residues 1 to 40 (MVNL…NGLD), 140 to 186 (QTGP…DEPS), and 256 to 278 (AESS…SEVF). Residues 183–257 (DEPSDLEELE…LLEKWLNDAE (75 aa)) enclose the POU-specific domain. A compositionally biased stretch (low complexity) spans 258 to 275 (SSPSDPSVSTPSSYPSLS). Residues 281–340 (KRKKRTSIETNIRLTLEKRFQDNPKPSSEEISMIAEQLSMEKEVVRVWFCNRRQKEKRIN) constitute a DNA-binding region (homeobox). The disordered stretch occupies residues 363–421 (LGPLSVPPVHSTMPGTVTSSCSPGNNSRPSSPGSGLHASSPTASQNNSKAAVNSASSFN). Composition is skewed to low complexity over residues 381 to 397 (SSCS…PGSG) and 405 to 421 (ASQN…SSFN).

The protein belongs to the POU transcription factor family. Class-2 subfamily. Interacts (via the POU domain) with POU2AF1 and POU2AF2 in a DNA-dependent manner; this interaction recruits POU2AF2 to chromatin and increases POU2F3 transactivation activity. In terms of tissue distribution, specifically expressed in epidermis and cultured keratinocytes.

It localises to the nucleus. Transcription factor that binds to the octamer motif (5'-ATTTGCAT-3') and regulates cell type-specific differentiation pathways. Involved in the regulation of keratinocytes differentiation. The POU2F3-POU2AF2/POU2AF3 complex drives the expression of tuft-cell-specific genes, a rare chemosensory cells that coordinate immune and neural functions within mucosal epithelial tissues. The sequence is that of POU domain, class 2, transcription factor 3 from Homo sapiens (Human).